A 105-amino-acid polypeptide reads, in one-letter code: Protamine-2 (105 aa).

The segment at 1-74 (MVRYRMRSPS…RRSCRRRRRH (74 aa)) is disordered. S8, S10, and S33 each carry phosphoserine. The span at 33–42 (SPERVEDYGR) shows a compositional bias: basic and acidic residues. A compositionally biased stretch (basic residues) spans 43 to 74 (THRGHHRHRRCSRKRLHRIHKRRRSCRRRRRH).

This sequence belongs to the protamine P2 family. As to quaternary structure, interacts with TDRP. Proteolytic processing into mature chains is required for histone eviction during spermatogenesis. Transition proteins (TNP1 and TNP2) are required for processing. Testis.

The protein localises to the nucleus. It localises to the chromosome. Functionally, protamines substitute for histones in the chromatin of sperm during the haploid phase of spermatogenesis. They compact sperm DNA into a highly condensed, stable and inactive complex. This chain is Protamine-2 (Prm2), found in Rattus fuscipes (Bush rat).